Here is a 367-residue protein sequence, read N- to C-terminus: Glutamate 5-kinase (367 aa).

Position 10 (K10) interacts with ATP. S50, D137, and N149 together coordinate substrate. ATP contacts are provided by residues 169-170 (TD) and 211-217 (TGGMGTK). In terms of domain architecture, PUA spans 275 to 353 (AGELTVDAGA…QQIDAILGYE (79 aa)).

It belongs to the glutamate 5-kinase family.

Its subcellular location is the cytoplasm. It carries out the reaction L-glutamate + ATP = L-glutamyl 5-phosphate + ADP. The protein operates within amino-acid biosynthesis; L-proline biosynthesis; L-glutamate 5-semialdehyde from L-glutamate: step 1/2. Catalyzes the transfer of a phosphate group to glutamate to form L-glutamate 5-phosphate. This Klebsiella pneumoniae (strain 342) protein is Glutamate 5-kinase.